Reading from the N-terminus, the 749-residue chain is ATP-dependent zinc metalloprotease FtsH 3 (749 aa).

A compositionally biased stretch (basic and acidic residues) spans 1-17 (MTGDPPERRSNGDRLPA). The disordered stretch occupies residues 1 to 67 (MTGDPPERRS…GRNGGGMRPF (67 aa)). Topologically, residues 1–75 (MTGDPPERRS…PFRFPGGRWG (75 aa)) are cytoplasmic. A helical membrane pass occupies residues 76–96 (ILVFILVLLGLNWWISSNALA). Topologically, residues 97–186 (PSERVRVPYS…NASPADNGPS (90 aa)) are extracellular. A helical transmembrane segment spans residues 187–207 (LLVSILLGFGPVILIIALFVF). Topologically, residues 208–749 (LSRRMAGAAG…LGGSVRAGDA (542 aa)) are cytoplasmic. 281-288 (GQPGTGKT) contributes to the ATP binding site. Zn(2+) is bound at residue histidine 504. Glutamate 505 is a catalytic residue. Residues histidine 508 and aspartate 580 each contribute to the Zn(2+) site. Basic and acidic residues predominate over residues 679–689 (GLEHMRPERVE). The tract at residues 679 to 749 (GLEHMRPERV…LGGSVRAGDA (71 aa)) is disordered.

This sequence in the central section; belongs to the AAA ATPase family. In the C-terminal section; belongs to the peptidase M41 family. In terms of assembly, homohexamer. Zn(2+) is required as a cofactor.

It localises to the cell membrane. Its function is as follows. Acts as a processive, ATP-dependent zinc metallopeptidase for both cytoplasmic and membrane proteins. Plays a role in the quality control of integral membrane proteins. This Conexibacter woesei (strain DSM 14684 / CCUG 47730 / CIP 108061 / JCM 11494 / NBRC 100937 / ID131577) protein is ATP-dependent zinc metalloprotease FtsH 3.